The following is a 361-amino-acid chain: S-adenosylmethionine:tRNA ribosyltransferase-isomerase (361 aa).

It belongs to the QueA family. As to quaternary structure, monomer.

The protein localises to the cytoplasm. It catalyses the reaction 7-aminomethyl-7-carbaguanosine(34) in tRNA + S-adenosyl-L-methionine = epoxyqueuosine(34) in tRNA + adenine + L-methionine + 2 H(+). Its pathway is tRNA modification; tRNA-queuosine biosynthesis. In terms of biological role, transfers and isomerizes the ribose moiety from AdoMet to the 7-aminomethyl group of 7-deazaguanine (preQ1-tRNA) to give epoxyqueuosine (oQ-tRNA). The chain is S-adenosylmethionine:tRNA ribosyltransferase-isomerase from Rhizobium etli (strain ATCC 51251 / DSM 11541 / JCM 21823 / NBRC 15573 / CFN 42).